The chain runs to 241 residues: Sugar fermentation stimulation protein homolog (241 aa).

This sequence belongs to the SfsA family.

This Nostoc sp. (strain PCC 7120 / SAG 25.82 / UTEX 2576) protein is Sugar fermentation stimulation protein homolog.